Reading from the N-terminus, the 117-residue chain is Large ribosomal subunit protein uL18 (117 aa).

It belongs to the universal ribosomal protein uL18 family. In terms of assembly, part of the 50S ribosomal subunit; part of the 5S rRNA/L5/L18/L25 subcomplex. Contacts the 5S and 23S rRNAs.

This is one of the proteins that bind and probably mediate the attachment of the 5S RNA into the large ribosomal subunit, where it forms part of the central protuberance. This is Large ribosomal subunit protein uL18 from Proteus mirabilis (strain HI4320).